Here is a 462-residue protein sequence, read N- to C-terminus: Glycerol-3-phosphate acyltransferase ATS12, chloroplastic (462 aa).

A chloroplast-targeting transit peptide spans 1–82; that stretch reads MFILSSSSST…DKESAQSAAT (82 aa). The HXXXXD motif signature appears at 233–238; it reads HQTEAD.

Belongs to the GPAT/DAPAT family.

Its subcellular location is the plastid. The protein localises to the chloroplast stroma. The enzyme catalyses a fatty acyl-[ACP] + sn-glycerol 3-phosphate = a 1-acyl-sn-glycero-3-phosphate + holo-[ACP]. It carries out the reaction sn-glycerol 3-phosphate + an acyl-CoA = a 1-acyl-sn-glycero-3-phosphate + CoA. The protein operates within phospholipid metabolism; CDP-diacylglycerol biosynthesis; CDP-diacylglycerol from sn-glycerol 3-phosphate: step 1/3. Esterifies the acyl-group from acyl-acyl carrier proteins (acyl-ACPs) to the sn-1 position of glycerol-3-phosphate. The physiological acyl donors in chloroplasts are acyl-ACPs, but acyl-CoAs are used as artificial donor for in vitro reactions. The enzyme from chilling-resistant plants discriminates against non-fluid palmitic acid and selects oleic acid whereas the enzyme from sensitive plants accepts both fatty acids. Squash is chilling-sensitive. Does not seem to discriminate between the acyl-ACP thioesters 18:1-ACP, 18:0-ACP and 16:0-ACP. Exhibits higher selectivity for 16:0-CoA than 18:1-CoA in vitro. This is Glycerol-3-phosphate acyltransferase ATS12, chloroplastic from Cucurbita moschata (Winter crookneck squash).